The sequence spans 195 residues: Imidazoleglycerol-phosphate dehydratase (195 aa).

This sequence belongs to the imidazoleglycerol-phosphate dehydratase family.

Its subcellular location is the cytoplasm. It carries out the reaction D-erythro-1-(imidazol-4-yl)glycerol 3-phosphate = 3-(imidazol-4-yl)-2-oxopropyl phosphate + H2O. The protein operates within amino-acid biosynthesis; L-histidine biosynthesis; L-histidine from 5-phospho-alpha-D-ribose 1-diphosphate: step 6/9. The protein is Imidazoleglycerol-phosphate dehydratase of Acetivibrio thermocellus (strain ATCC 27405 / DSM 1237 / JCM 9322 / NBRC 103400 / NCIMB 10682 / NRRL B-4536 / VPI 7372) (Clostridium thermocellum).